The following is a 159-amino-acid chain: Small ribosomal subunit protein bS16 (159 aa).

Low complexity predominate over residues 102 to 119 (GIPEAAEEAPATESVAEA). The interval 102–159 (GIPEAAEEAPATESVAEAEVADVPESELSEAATETAAAELSPPEAEVEKPQVEEAVEA) is disordered. A compositionally biased stretch (acidic residues) spans 120 to 129 (EVADVPESEL). A compositionally biased stretch (low complexity) spans 130-145 (SEAATETAAAELSPPE).

It belongs to the bacterial ribosomal protein bS16 family.

This Synechococcus sp. (strain JA-2-3B'a(2-13)) (Cyanobacteria bacterium Yellowstone B-Prime) protein is Small ribosomal subunit protein bS16.